The chain runs to 251 residues: NADPH-dependent oxidoreductase (251 aa).

It belongs to the flavin oxidoreductase frp family. Requires FMN as cofactor.

Reduces FMN, organic nitro compounds and disulfide DTNB. Involved in maintenance of the cellular redox state and the disulfide stress response. This is NADPH-dependent oxidoreductase (nfrA) from Staphylococcus aureus (strain bovine RF122 / ET3-1).